Here is a 492-residue protein sequence, read N- to C-terminus: Cysteine--tRNA ligase (492 aa).

Cys-29 serves as a coordination point for Zn(2+). A 'HIGH' region motif is present at residues 31–41; it reads PTVYDYAHIGN. Residues Cys-222, His-247, and Glu-251 each contribute to the Zn(2+) site. The 'KMSKS' region signature appears at 279–283; the sequence is KMSKS. Lys-282 lines the ATP pocket.

It belongs to the class-I aminoacyl-tRNA synthetase family. In terms of assembly, monomer. The cofactor is Zn(2+).

It localises to the cytoplasm. The enzyme catalyses tRNA(Cys) + L-cysteine + ATP = L-cysteinyl-tRNA(Cys) + AMP + diphosphate. This Treponema denticola (strain ATCC 35405 / DSM 14222 / CIP 103919 / JCM 8153 / KCTC 15104) protein is Cysteine--tRNA ligase.